Here is a 538-residue protein sequence, read N- to C-terminus: Putative cysteine ligase BshC (538 aa).

A coiled-coil region spans residues 460–484 (KINEQIELLERMLKRNVEKKHEVEL).

Belongs to the BshC family.

In terms of biological role, involved in bacillithiol (BSH) biosynthesis. May catalyze the last step of the pathway, the addition of cysteine to glucosamine malate (GlcN-Mal) to generate BSH. This Bacillus cereus (strain AH187) protein is Putative cysteine ligase BshC.